Consider the following 194-residue polypeptide: MVENEKTSVEETEEKAETEDEMLTEDPSNEDSDEANEEGNELSEEEKRIAELEGQVDELNQRLLRIQADYDNFRRRQREEKEAAAKYRAQSLIEELLPALDNFERALLVEPEQEETKTLLKGMEMVYRQVSEALKKEGLEVIETKGETFDPHLHQAVMQVEDAEFESNEIVEELQKGYKLKDRVIRPSMVKVNA.

A disordered region spans residues 1–53 (MVENEKTSVEETEEKAETEDEMLTEDPSNEDSDEANEEGNELSEEEKRIAELE). Residues 10-44 (EETEEKAETEDEMLTEDPSNEDSDEANEEGNELSE) show a composition bias toward acidic residues.

Belongs to the GrpE family. In terms of assembly, homodimer.

It localises to the cytoplasm. Its function is as follows. Participates actively in the response to hyperosmotic and heat shock by preventing the aggregation of stress-denatured proteins, in association with DnaK and GrpE. It is the nucleotide exchange factor for DnaK and may function as a thermosensor. Unfolded proteins bind initially to DnaJ; upon interaction with the DnaJ-bound protein, DnaK hydrolyzes its bound ATP, resulting in the formation of a stable complex. GrpE releases ADP from DnaK; ATP binding to DnaK triggers the release of the substrate protein, thus completing the reaction cycle. Several rounds of ATP-dependent interactions between DnaJ, DnaK and GrpE are required for fully efficient folding. This Halalkalibacterium halodurans (strain ATCC BAA-125 / DSM 18197 / FERM 7344 / JCM 9153 / C-125) (Bacillus halodurans) protein is Protein GrpE.